Reading from the N-terminus, the 426-residue chain is Glutamate-1-semialdehyde 2,1-aminomutase (426 aa).

Position 265 is an N6-(pyridoxal phosphate)lysine (Lys265).

This sequence belongs to the class-III pyridoxal-phosphate-dependent aminotransferase family. HemL subfamily. As to quaternary structure, homodimer. The cofactor is pyridoxal 5'-phosphate.

It localises to the cytoplasm. The enzyme catalyses (S)-4-amino-5-oxopentanoate = 5-aminolevulinate. The protein operates within porphyrin-containing compound metabolism; protoporphyrin-IX biosynthesis; 5-aminolevulinate from L-glutamyl-tRNA(Glu): step 2/2. The polypeptide is Glutamate-1-semialdehyde 2,1-aminomutase (Marinobacter nauticus (strain ATCC 700491 / DSM 11845 / VT8) (Marinobacter aquaeolei)).